We begin with the raw amino-acid sequence, 280 residues long: Large ribosomal subunit protein uL2 (280 aa).

2 disordered regions span residues 33 to 55 (LTEG…RRRG) and 224 to 266 (AMNP…KASQ). Positions 256 to 266 (TRTRNKNKASQ) are enriched in basic residues.

Belongs to the universal ribosomal protein uL2 family. As to quaternary structure, part of the 50S ribosomal subunit. Forms a bridge to the 30S subunit in the 70S ribosome.

Its function is as follows. One of the primary rRNA binding proteins. Required for association of the 30S and 50S subunits to form the 70S ribosome, for tRNA binding and peptide bond formation. It has been suggested to have peptidyltransferase activity; this is somewhat controversial. Makes several contacts with the 16S rRNA in the 70S ribosome. The polypeptide is Large ribosomal subunit protein uL2 (Ruegeria pomeroyi (strain ATCC 700808 / DSM 15171 / DSS-3) (Silicibacter pomeroyi)).